The chain runs to 130 residues: Small ribosomal subunit protein uS9 (130 aa).

Residues 101–130 are disordered; the sequence is AGLLTRDARMKERKKPGLKKARKASQFSKR. Residues 111-130 are compositionally biased toward basic residues; the sequence is KERKKPGLKKARKASQFSKR.

The protein belongs to the universal ribosomal protein uS9 family.

The chain is Small ribosomal subunit protein uS9 from Levilactobacillus brevis (strain ATCC 367 / BCRC 12310 / CIP 105137 / JCM 1170 / LMG 11437 / NCIMB 947 / NCTC 947) (Lactobacillus brevis).